Reading from the N-terminus, the 119-residue chain is Large ribosomal subunit protein uL18 (119 aa).

It belongs to the universal ribosomal protein uL18 family. In terms of assembly, part of the 50S ribosomal subunit; part of the 5S rRNA/L5/L18/L25 subcomplex. Contacts the 5S and 23S rRNAs.

Functionally, this is one of the proteins that bind and probably mediate the attachment of the 5S RNA into the large ribosomal subunit, where it forms part of the central protuberance. This Clostridium perfringens (strain 13 / Type A) protein is Large ribosomal subunit protein uL18.